Consider the following 354-residue polypeptide: Thiamine thiazole synthase 1, chloroplastic (354 aa).

Residues Met1–Ser43 constitute a chloroplast transit peptide. Residues Ala96, Glu116–Gln117, Gly124, and Val190 each bind substrate. The residue at position 219 (Cys219) is a 2,3-didehydroalanine (Cys). Residues Asp221, His236, Met288, and Arg298 to Gly300 contribute to the substrate site.

This sequence belongs to the THI4 family. Homooctamer. Fe cation serves as cofactor. During the catalytic reaction, a sulfide is transferred from Cys-219 to a reaction intermediate, generating a dehydroalanine residue.

It localises to the plastid. Its subcellular location is the chloroplast. The catalysed reaction is [ADP-thiazole synthase]-L-cysteine + glycine + NAD(+) = [ADP-thiazole synthase]-dehydroalanine + ADP-5-ethyl-4-methylthiazole-2-carboxylate + nicotinamide + 3 H2O + 2 H(+). In terms of biological role, involved in biosynthesis of the thiamine precursor thiazole. Catalyzes the conversion of NAD and glycine to adenosine diphosphate 5-(2-hydroxyethyl)-4-methylthiazole-2-carboxylic acid (ADT), an adenylated thiazole intermediate. The reaction includes an iron-dependent sulfide transfer from a conserved cysteine residue of the protein to a thiazole intermediate. The enzyme can only undergo a single turnover, which suggests it is a suicide enzyme. May have additional roles in adaptation to various stress conditions and in DNA damage tolerance. This Sorghum bicolor (Sorghum) protein is Thiamine thiazole synthase 1, chloroplastic.